Here is a 293-residue protein sequence, read N- to C-terminus: uncharacterized protein (293 aa).

The region spanning 1 to 58 (MQLQELHMLVVLAEELNMRKAAERLFVSQPALSQRLQTIEKAWGTKIFLRSQKGLTVT) is the HTH lysR-type domain. The H-T-H motif DNA-binding region spans 18 to 37 (MRKAAERLFVSQPALSQRLQ).

It belongs to the LysR transcriptional regulatory family.

This is an uncharacterized protein from Bacillus subtilis (strain 168).